Consider the following 586-residue polypeptide: Putative Lon protease homolog (586 aa).

A Lon proteolytic domain is found at 346–543 (GERIGQINAL…TDALPLLLNL (198 aa)). Residues Ser-438 and Lys-481 contribute to the active site.

It belongs to the peptidase S16 family.

This is Putative Lon protease homolog (ycbZ) from Escherichia coli (strain K12).